The following is a 185-amino-acid chain: Peptidyl-tRNA hydrolase (185 aa).

Position 14 (Y14) interacts with tRNA. H19 acts as the Proton acceptor in catalysis. TRNA contacts are provided by Y64, N66, and N112.

The protein belongs to the PTH family. In terms of assembly, monomer.

The protein resides in the cytoplasm. The enzyme catalyses an N-acyl-L-alpha-aminoacyl-tRNA + H2O = an N-acyl-L-amino acid + a tRNA + H(+). In terms of biological role, hydrolyzes ribosome-free peptidyl-tRNAs (with 1 or more amino acids incorporated), which drop off the ribosome during protein synthesis, or as a result of ribosome stalling. Catalyzes the release of premature peptidyl moieties from peptidyl-tRNA molecules trapped in stalled 50S ribosomal subunits, and thus maintains levels of free tRNAs and 50S ribosomes. This is Peptidyl-tRNA hydrolase from Lactobacillus helveticus (strain DPC 4571).